A 430-amino-acid chain; its full sequence is Dynactin subunit 2 (430 aa).

Disordered stretches follow at residues 1-51 (MSEG…IDRS) and 201-228 (SLSSSTTEQNTQQPSNNNTTTNITSSSS). Positions 32-44 (SISNLADESSELV) are enriched in polar residues. Coiled coils occupy residues 241–319 (TGEQ…QDET) and 397–430 (DDSFKSNLLTIKSNIQQLESRIETLQNRQQQQQQ).

It belongs to the dynactin subunit 2 family. In terms of assembly, subunit of dynactin, a multiprotein complex associated with dynein.

It localises to the cytoplasm. The protein resides in the cytoskeleton. The protein localises to the membrane. Modulates cytoplasmic dynein binding to an organelle, and plays a role in prometaphase chromosome alignment and spindle organization during mitosis. The protein is Dynactin subunit 2 (dynB) of Dictyostelium discoideum (Social amoeba).